The following is a 440-amino-acid chain: WAS/WASL-interacting protein family member 2 (440 aa).

Over residues 1-18 (MPIPPPPPPPPGPPPPPT) the composition is skewed to pro residues. Residues 1 to 38 (MPIPPPPPPPPGPPPPPTFNQANTEQPKLSRDEQRNRG) form a disordered region. The WH2 domain maps to 36 to 53 (NRGALLQDICKGTKLKKV). Position 37 is an asymmetric dimethylarginine (R37). Residues 49–52 (KLKK) are binds actin. Disordered regions lie at residues 56–386 (VNDR…RDSI) and 419–440 (RVYPSKTNRAARGAPPLPPILR). Residues 116–132 (PSSRAAAPRPPGSAASG) show a composition bias toward low complexity. Composition is skewed to pro residues over residues 176 to 193 (APPPPPPGRRANAPPTPL), 225 to 236 (PAPPPVKPPPSP), 249 to 262 (APPPPPYRQPPGVP), and 356 to 378 (RGKPPPPPSRTPAGPPPPPPPPL).

The protein belongs to the verprolin family. As to quaternary structure, interacts with WASL and WASP, and this interaction results in cytoplasmic relocation of these two proteins along actin filaments. Interacts with NCK2 resulting in the localization to sites of focal adhesions.

It is found in the cytoplasm. The protein resides in the cytoskeleton. Its function is as follows. Plays an active role in the formation of cell surface protrusions downstream of activated PDGFB receptors. Plays an important role in actin-microspike formation through cooperation with WASL. May cooperate with WASP and WASL to induce mobilization and reorganization of the actin filament system. The chain is WAS/WASL-interacting protein family member 2 (Wipf2) from Mus musculus (Mouse).